A 290-amino-acid polypeptide reads, in one-letter code: Undecaprenyl-diphosphatase 2 (290 aa).

6 consecutive transmembrane segments (helical) span residues 104 to 124, 128 to 148, 174 to 194, 205 to 225, 237 to 257, and 268 to 288; these read WMVI…KDLI, LRNL…FILA, CLAL…GLFL, SFLL…PDAF, QLFV…AWLL, and FALW…FGVL.

It belongs to the UppP family.

The protein localises to the cell membrane. The catalysed reaction is di-trans,octa-cis-undecaprenyl diphosphate + H2O = di-trans,octa-cis-undecaprenyl phosphate + phosphate + H(+). Its function is as follows. Catalyzes the dephosphorylation of undecaprenyl diphosphate (UPP). Confers resistance to bacitracin. In Corynebacterium jeikeium (strain K411), this protein is Undecaprenyl-diphosphatase 2.